Reading from the N-terminus, the 594-residue chain is Actin-histidine N-methyltransferase (594 aa).

Residues 1–22 are disordered; that stretch reads MGKKSRVKTQKSGTGATATVSP. Polar residues predominate over residues 10 to 20; it reads QKSGTGATATV. Residues arginine 75, 104 to 106, arginine 254, 275 to 279, and 325 to 327 contribute to the S-adenosyl-L-methionine site; these read EGF, DMCNH, and SGF. Residues 94 to 314 enclose the SET domain; the sequence is EGFEMVNFKE…AGDQIYIFYG (221 aa). The tract at residues 551 to 594 is disordered; the sequence is GLVNGENLIPNGTRSENESLSPEESENVTGEESSGSMAKVKERL.

It belongs to the class V-like SAM-binding methyltransferase superfamily. SETD3 actin-histidine methyltransferase family. As to quaternary structure, interacts with MYOD1. Phosphorylated by GSK3B, which is required for recognition by the SCF(FBXW7) complex and subsequent degradation. Post-translationally, ubiquitinated by the SCF(FBXW7) complex following phosphorylation by GSK3B, leading to its degradation by the proteasome. In terms of tissue distribution, prominently expressed in the heart and skeletal muscles and is also detected weakly in the stomach, small intestine, and colon.

It is found in the cytoplasm. The protein localises to the nucleus. It carries out the reaction L-histidyl-[protein] + S-adenosyl-L-methionine = N(tele)-methyl-L-histidyl-[protein] + S-adenosyl-L-homocysteine + H(+). Protein-histidine N-methyltransferase that specifically mediates 3-methylhistidine (tele-methylhistidine) methylation of actin at 'His-73'. Histidine methylation of actin is required for smooth muscle contraction of the laboring uterus during delivery. Does not have protein-lysine N-methyltransferase activity and probably only catalyzes histidine methylation of actin. This Mus musculus (Mouse) protein is Actin-histidine N-methyltransferase.